Here is a 264-residue protein sequence, read N- to C-terminus: MSGSTITPWVVGNWKMNPMRANANQLIEEFKQLLQQNQIADENCHVGVAPVSIALTTVQAQLQDAARTVHTVAQDVSRVAGTGAYTGEVSAELLKDSQINFVLVGHSERRDIFGDNVEILKAKLQNALNAGMTVIYCVGESLEQREQGQAEQVVLQQICDIAPVVTAEQWQNQVVIAYEPIWAIGTGKTASPQDAQAMHAKIREGLCQLTPAGSNIAILYGGSVKAENAVELAACPDINGALVGGASLKAASFYQIVQAFAQSK.

13-15 (NWK) serves as a coordination point for substrate. Histidine 106 functions as the Electrophile in the catalytic mechanism. The Proton acceptor role is filled by glutamate 179. Substrate contacts are provided by residues glycine 185, serine 223, and 244–245 (GG).

It belongs to the triosephosphate isomerase family. As to quaternary structure, homodimer.

The protein localises to the cytoplasm. The enzyme catalyses D-glyceraldehyde 3-phosphate = dihydroxyacetone phosphate. It participates in carbohydrate biosynthesis; gluconeogenesis. Its pathway is carbohydrate degradation; glycolysis; D-glyceraldehyde 3-phosphate from glycerone phosphate: step 1/1. Involved in the gluconeogenesis. Catalyzes stereospecifically the conversion of dihydroxyacetone phosphate (DHAP) to D-glyceraldehyde-3-phosphate (G3P). The chain is Triosephosphate isomerase from Acinetobacter baumannii (strain AB0057).